The chain runs to 270 residues: 4-hydroxy-tetrahydrodipicolinate reductase (270 aa).

7 to 12 lines the NAD(+) pocket; sequence GANGRM. Arg34 lines the NADP(+) pocket. Residues 97–99 and 121–124 each bind NAD(+); these read GTT and SGNM. His155 functions as the Proton donor/acceptor in the catalytic mechanism. His156 contributes to the (S)-2,3,4,5-tetrahydrodipicolinate binding site. Lys159 (proton donor) is an active-site residue. 165 to 166 is a binding site for (S)-2,3,4,5-tetrahydrodipicolinate; it reads GT.

It belongs to the DapB family.

It is found in the cytoplasm. The enzyme catalyses (S)-2,3,4,5-tetrahydrodipicolinate + NAD(+) + H2O = (2S,4S)-4-hydroxy-2,3,4,5-tetrahydrodipicolinate + NADH + H(+). The catalysed reaction is (S)-2,3,4,5-tetrahydrodipicolinate + NADP(+) + H2O = (2S,4S)-4-hydroxy-2,3,4,5-tetrahydrodipicolinate + NADPH + H(+). The protein operates within amino-acid biosynthesis; L-lysine biosynthesis via DAP pathway; (S)-tetrahydrodipicolinate from L-aspartate: step 4/4. Its function is as follows. Catalyzes the conversion of 4-hydroxy-tetrahydrodipicolinate (HTPA) to tetrahydrodipicolinate. This Bartonella tribocorum (strain CIP 105476 / IBS 506) protein is 4-hydroxy-tetrahydrodipicolinate reductase.